Here is a 642-residue protein sequence, read N- to C-terminus: Threonine--tRNA ligase (642 aa).

The TGS domain occupies 1 to 61 (MPVITLPDGS…ETDSDLSIIT (61 aa)). Residues 243–534 (DHRKIGKQLD…LIEEYAGKFP (292 aa)) are catalytic. Residues Cys334, His385, and His511 each coordinate Zn(2+).

It belongs to the class-II aminoacyl-tRNA synthetase family. In terms of assembly, homodimer. It depends on Zn(2+) as a cofactor.

The protein localises to the cytoplasm. It catalyses the reaction tRNA(Thr) + L-threonine + ATP = L-threonyl-tRNA(Thr) + AMP + diphosphate + H(+). Its function is as follows. Catalyzes the attachment of threonine to tRNA(Thr) in a two-step reaction: L-threonine is first activated by ATP to form Thr-AMP and then transferred to the acceptor end of tRNA(Thr). Also edits incorrectly charged L-seryl-tRNA(Thr). This is Threonine--tRNA ligase from Shewanella pealeana (strain ATCC 700345 / ANG-SQ1).